The chain runs to 74 residues: U-scoloptoxin(09)-Sm3a (74 aa).

The N-terminal stretch at 1–22 (MNANSIFLCFFIMLIGCTLTHS) is a signal peptide.

The protein belongs to the scoloptoxin-09 family. Contains 3 disulfide bonds. In terms of tissue distribution, expressed by the venom gland.

The protein resides in the secreted. The polypeptide is U-scoloptoxin(09)-Sm3a (Scolopendra morsitans (Tanzanian blue ringleg centipede)).